Consider the following 322-residue polypeptide: Sideroflexin fsf1 (322 aa).

4 helical membrane passes run 143–163 (SYIY…KIVP), 175–195 (VLGR…NVFL), 229–249 (TALS…LVLM), and 269–289 (LGLI…VFPA).

Belongs to the sideroflexin family.

The protein resides in the mitochondrion membrane. Mitochondrial amino-acid transporter that mediates transport of serine into mitochondria. The chain is Sideroflexin fsf1 from Schizosaccharomyces pombe (strain 972 / ATCC 24843) (Fission yeast).